Consider the following 575-residue polypeptide: Transcription factor COE2 (575 aa).

The tract at residues R62 to N65 is interaction with DNA. A C5-type zinc finger spans residues C150 to C169. Interaction with DNA stretches follow at residues N196–N203 and N235–K238. The IPT/TIG domain occupies P253–T336. Residues S441 to T453 are compositionally biased toward polar residues. Residues S441–M479 are disordered. The segment covering S454–M479 has biased composition (low complexity).

Belongs to the COE family. As to quaternary structure, forms either a homodimer or a heterodimer with a related family member. Interacts with SIX1.

The protein localises to the nucleus. Its function is as follows. Transcription factor that, in osteoblasts, activates the decoy receptor for RANKL, TNFRSF11B, which in turn regulates osteoclast differentiation. Acts in synergy with the Wnt-responsive LEF1/CTNNB1 pathway. Recognizes variations of the palindromic sequence 5'-ATTCCCNNGGGAATT-3'. The chain is Transcription factor COE2 (EBF2) from Homo sapiens (Human).